Here is a 409-residue protein sequence, read N- to C-terminus: Arginine deiminase (409 aa).

Catalysis depends on Cys399, which acts as the Amidino-cysteine intermediate.

Belongs to the arginine deiminase family.

The protein localises to the cytoplasm. It carries out the reaction L-arginine + H2O = L-citrulline + NH4(+). Its pathway is amino-acid degradation; L-arginine degradation via ADI pathway; carbamoyl phosphate from L-arginine: step 1/2. In Streptococcus gordonii (strain Challis / ATCC 35105 / BCRC 15272 / CH1 / DL1 / V288), this protein is Arginine deiminase.